The primary structure comprises 451 residues: MAKHERGLRFQPAGGVKTVQIPAGKKQRLTIERLSDDGRGIAFLEGKTWFVAGSLAGEEVEARVLNARGKVVEARTERVFTASTMRRAPACEYFGRCGGCSVQHVPHEEQLALKQRMLAEQLLRVANVVPDEWAAPLSGAELAYRRRARVAVRWDAKAKRLDVGFRAAASQDIVSIEHCPVLVQALQPIMNELPGMLKNFSKPQALGHVELFSGVATAVLLRHTAPLAEADLALLQAFCSKHGAQLWLHGEGEPQPVSPGDTLGYRLEPWNLQLAWRPGDFIQVNAAVNTAMIEQALQWLAPAKDERVMDLFCGLGNFALPLAGLAREVVAVEGVATMVERAAVNAMSNDLHNVQFFQADLSQPLTHADWAAEGFSTVLLDPPRDGAFEVVRQIRKTGARRLLYVSCNPATLARDTVELISQGYRLKRAGILDMFPQTAHVEAMALFEMSK.

The TRAM domain occupies 20 to 78; the sequence is QIPAGKKQRLTIERLSDDGRGIAFLEGKTWFVAGSLAGEEVEARVLNARGKVVEARTER. Positions 91, 97, 100, and 179 each coordinate [4Fe-4S] cluster. Gln-283, Phe-312, Asn-317, Glu-333, Asp-360, and Asp-381 together coordinate S-adenosyl-L-methionine. The Nucleophile role is filled by Cys-407.

Belongs to the class I-like SAM-binding methyltransferase superfamily. RNA M5U methyltransferase family. RlmD subfamily.

The catalysed reaction is uridine(1939) in 23S rRNA + S-adenosyl-L-methionine = 5-methyluridine(1939) in 23S rRNA + S-adenosyl-L-homocysteine + H(+). In terms of biological role, catalyzes the formation of 5-methyl-uridine at position 1939 (m5U1939) in 23S rRNA. The polypeptide is 23S rRNA (uracil(1939)-C(5))-methyltransferase RlmD (Pseudomonas savastanoi pv. phaseolicola (strain 1448A / Race 6) (Pseudomonas syringae pv. phaseolicola (strain 1448A / Race 6))).